We begin with the raw amino-acid sequence, 343 residues long: L-threonine 3-dehydrogenase (343 aa).

Zn(2+) is bound at residue C40. Active-site charge relay system residues include T42 and H45. H65, E66, C95, C98, C101, and C109 together coordinate Zn(2+). NAD(+) is bound by residues I177, D197, R202, L264–I266, and I288–Y289.

The protein belongs to the zinc-containing alcohol dehydrogenase family. As to quaternary structure, homotetramer. Zn(2+) serves as cofactor.

The protein localises to the cytoplasm. The enzyme catalyses L-threonine + NAD(+) = (2S)-2-amino-3-oxobutanoate + NADH + H(+). The protein operates within amino-acid degradation; L-threonine degradation via oxydo-reductase pathway; glycine from L-threonine: step 1/2. Catalyzes the NAD(+)-dependent oxidation of L-threonine to 2-amino-3-ketobutyrate. The sequence is that of L-threonine 3-dehydrogenase from Vibrio atlanticus (strain LGP32) (Vibrio splendidus (strain Mel32)).